Consider the following 366-residue polypeptide: Alanine racemase (366 aa).

Catalysis depends on Lys40, which acts as the Proton acceptor; specific for D-alanine. Position 40 is an N6-(pyridoxal phosphate)lysine (Lys40). Residue Arg136 coordinates substrate. Residue Tyr263 is the Proton acceptor; specific for L-alanine of the active site. A substrate-binding site is contributed by Met310.

This sequence belongs to the alanine racemase family. Requires pyridoxal 5'-phosphate as cofactor.

The catalysed reaction is L-alanine = D-alanine. Its pathway is amino-acid biosynthesis; D-alanine biosynthesis; D-alanine from L-alanine: step 1/1. Catalyzes the interconversion of L-alanine and D-alanine. May also act on other amino acids. This is Alanine racemase (alr) from Streptococcus pyogenes serotype M5 (strain Manfredo).